A 208-amino-acid chain; its full sequence is Proheparin-binding EGF-like growth factor (208 aa).

The N-terminal stretch at methionine 1–glycine 23 is a signal peptide. The propeptide occupies glutamate 24 to glutamine 62. The Extracellular segment spans residues glutamate 24–threonine 160. The tract at residues alanine 82–lysine 103 is disordered. Threonine 85 carries O-linked (GalNAc...) threonine glycosylation. Positions asparagine 91–glycine 102 are enriched in basic residues. One can recognise an EGF-like domain in the interval lysine 104–histidine 144. 3 disulfide bridges follow: cysteine 108-cysteine 121, cysteine 116-cysteine 132, and cysteine 134-cysteine 143. A propeptide spans proline 149–histidine 208 (C-terminal). A helical membrane pass occupies residues threonine 161–phenylalanine 184. Over arginine 185–histidine 208 the chain is Cytoplasmic.

Interacts with FBLN1. Interacts with EGFR and ERBB4. Post-translationally, O-glycosylated. In terms of tissue distribution, most abundant in skeletal muscle, lung, spleen brain and heart.

Its subcellular location is the secreted. The protein localises to the extracellular space. It localises to the cell membrane. Growth factor that mediates its effects via EGFR, ERBB2 and ERBB4. Required for normal cardiac valve formation and normal heart function. Promotes smooth muscle cell proliferation. May be involved in macrophage-mediated cellular proliferation. It is mitogenic for fibroblasts, but not endothelial cells. It is able to bind EGF receptor/EGFR with higher affinity than EGF itself and is a far more potent mitogen for smooth muscle cells than EGF. Also acts as a diphtheria toxin receptor. The polypeptide is Proheparin-binding EGF-like growth factor (Hbegf) (Rattus norvegicus (Rat)).